The following is a 179-amino-acid chain: Ribosome maturation factor RimM (179 aa).

Positions 103–176 constitute a PRC barrel domain; it reads EPDTYYDHQL…IVEIDPPKGL (74 aa).

Belongs to the RimM family. Binds ribosomal protein uS19.

The protein resides in the cytoplasm. Its function is as follows. An accessory protein needed during the final step in the assembly of 30S ribosomal subunit, possibly for assembly of the head region. Essential for efficient processing of 16S rRNA. May be needed both before and after RbfA during the maturation of 16S rRNA. It has affinity for free ribosomal 30S subunits but not for 70S ribosomes. This chain is Ribosome maturation factor RimM, found in Mycobacterium leprae (strain Br4923).